An 82-amino-acid chain; its full sequence is Small ribosomal subunit protein bS16 (82 aa).

This sequence belongs to the bacterial ribosomal protein bS16 family.

The chain is Small ribosomal subunit protein bS16 from Vibrio atlanticus (strain LGP32) (Vibrio splendidus (strain Mel32)).